Consider the following 435-residue polypeptide: Glutamyl-tRNA(Gln) amidotransferase subunit D (435 aa).

The Asparaginase/glutaminase domain occupies Pro-91 to Asn-419. Active-site residues include Thr-101, Thr-177, Asp-178, and Lys-254.

This sequence belongs to the asparaginase 1 family. GatD subfamily. As to quaternary structure, heterodimer of GatD and GatE.

It catalyses the reaction L-glutamyl-tRNA(Gln) + L-glutamine + ATP + H2O = L-glutaminyl-tRNA(Gln) + L-glutamate + ADP + phosphate + H(+). Its function is as follows. Allows the formation of correctly charged Gln-tRNA(Gln) through the transamidation of misacylated Glu-tRNA(Gln) in organisms which lack glutaminyl-tRNA synthetase. The reaction takes place in the presence of glutamine and ATP through an activated gamma-phospho-Glu-tRNA(Gln). The GatDE system is specific for glutamate and does not act on aspartate. The chain is Glutamyl-tRNA(Gln) amidotransferase subunit D (gatD) from Methanothermobacter thermautotrophicus (strain ATCC 29096 / DSM 1053 / JCM 10044 / NBRC 100330 / Delta H) (Methanobacterium thermoautotrophicum).